We begin with the raw amino-acid sequence, 204 residues long: NADH-ubiquinone oxidoreductase subunit 9 (204 aa).

This sequence belongs to the complex I 30 kDa subunit family. In terms of assembly, complex I is composed of about 30 different subunits.

It localises to the mitochondrion inner membrane. It carries out the reaction a ubiquinone + NADH + 5 H(+)(in) = a ubiquinol + NAD(+) + 4 H(+)(out). Core subunit of the mitochondrial membrane respiratory chain NADH dehydrogenase (Complex I) that is believed to belong to the minimal assembly required for catalysis. Complex I functions in the transfer of electrons from NADH to the respiratory chain. The immediate electron acceptor for the enzyme is believed to be ubiquinone. The chain is NADH-ubiquinone oxidoreductase subunit 9 (NAD9) from Reclinomonas americana.